Consider the following 209-residue polypeptide: Thymidylate kinase (209 aa).

ATP is bound at residue 10–17 (GPDGAGKT).

Belongs to the thymidylate kinase family.

The catalysed reaction is dTMP + ATP = dTDP + ADP. In terms of biological role, phosphorylation of dTMP to form dTDP in both de novo and salvage pathways of dTTP synthesis. This is Thymidylate kinase from Pediococcus pentosaceus (strain ATCC 25745 / CCUG 21536 / LMG 10740 / 183-1w).